A 332-amino-acid polypeptide reads, in one-letter code: Phospho-N-acetylmuramoyl-pentapeptide-transferase (332 aa).

Helical transmembrane passes span 9 to 29 (IYTIIIGFFITLILGPLIIPF), 55 to 75 (TIGGLIIIASVLVTSFTAGLI), 79 to 99 (LWVAIGAMVAFGLIGFIDDFI), 115 to 135 (MSLQIIVAVFLAIYQSNISVM), 155 to 175 (IPQYLDLGILYIPFIVFVVVA), 196 to 216 (IVAAFFSILAMEWGYPSLAIF), 253 to 273 (AVAILMNVALIVPIVGGIYFA), and 312 to 332 (VVIVFWIVTVILCLIGMLGLN).

Belongs to the glycosyltransferase 4 family. MraY subfamily. Mg(2+) is required as a cofactor.

It is found in the cell membrane. It carries out the reaction UDP-N-acetyl-alpha-D-muramoyl-L-alanyl-gamma-D-glutamyl-meso-2,6-diaminopimeloyl-D-alanyl-D-alanine + di-trans,octa-cis-undecaprenyl phosphate = di-trans,octa-cis-undecaprenyl diphospho-N-acetyl-alpha-D-muramoyl-L-alanyl-D-glutamyl-meso-2,6-diaminopimeloyl-D-alanyl-D-alanine + UMP. It functions in the pathway cell wall biogenesis; peptidoglycan biosynthesis. Functionally, catalyzes the initial step of the lipid cycle reactions in the biosynthesis of the cell wall peptidoglycan: transfers peptidoglycan precursor phospho-MurNAc-pentapeptide from UDP-MurNAc-pentapeptide onto the lipid carrier undecaprenyl phosphate, yielding undecaprenyl-pyrophosphoryl-MurNAc-pentapeptide, known as lipid I. The sequence is that of Phospho-N-acetylmuramoyl-pentapeptide-transferase from Alkaliphilus oremlandii (strain OhILAs) (Clostridium oremlandii (strain OhILAs)).